The chain runs to 180 residues: Insertion element IS1296 uncharacterized 21.4 kDa protein (180 aa).

This sequence belongs to the IS150/IS1296 orfA family.

The sequence is that of Insertion element IS1296 uncharacterized 21.4 kDa protein from Mycoplasma mycoides subsp. mycoides SC.